The primary structure comprises 576 residues: Outer capsid protein VP4 (576 aa).

Its subcellular location is the virion. This chain is Outer capsid protein VP4 (Segment-4), found in Banna virus (BAV).